The following is a 1340-amino-acid chain: Serine/threonine-protein phosphatase 7 long form homolog (1340 aa).

2 residues coordinate Mn(2+): aspartate 660 and histidine 662. Histidine 722 (proton donor) is an active-site residue. Histidine 773 contacts Mn(2+). Disordered regions lie at residues 788 to 814 (QERN…DRSE), 1012 to 1093 (KSMD…SRTR), 1196 to 1218 (TDGA…SEDI), and 1266 to 1340 (FTNL…DMDS). Basic residues predominate over residues 790 to 799 (RNRKRKRTQK). The segment covering 1018 to 1027 (EQMEVDEKDD) has biased composition (acidic residues). The span at 1049–1080 (GDRDMVDFSDKTENGSKEADHSETAEISKDLS) shows a compositional bias: basic and acidic residues. A compositionally biased stretch (polar residues) spans 1203–1213 (EPSTSKLNYSE). 2 stretches are compositionally biased toward basic and acidic residues: residues 1266-1289 (FTNL…ERVI) and 1318-1328 (DSVDSKNKGSL).

The protein belongs to the PPP phosphatase family. PP-7 subfamily. It depends on Mn(2+) as a cofactor. As to expression, expressed in root tips, the shoot apical meristem (SAM), leaf vasculature, hydathodes and mature flowers.

It is found in the nucleus. It catalyses the reaction O-phospho-L-seryl-[protein] + H2O = L-seryl-[protein] + phosphate. It carries out the reaction O-phospho-L-threonyl-[protein] + H2O = L-threonyl-[protein] + phosphate. Its function is as follows. Maybe required to maintain cell division activity in meristematic cells. In Arabidopsis thaliana (Mouse-ear cress), this protein is Serine/threonine-protein phosphatase 7 long form homolog.